Consider the following 316-residue polypeptide: Beta-ketoacyl-[acyl-carrier-protein] synthase III 1 (316 aa).

Residues Cys112 and His243 contribute to the active site. The tract at residues 244 to 248 (QANYR) is ACP-binding. Asn273 is a catalytic residue.

Belongs to the thiolase-like superfamily. FabH family. Homodimer.

The protein resides in the cytoplasm. It catalyses the reaction malonyl-[ACP] + acetyl-CoA + H(+) = 3-oxobutanoyl-[ACP] + CO2 + CoA. Its pathway is lipid metabolism; fatty acid biosynthesis. Functionally, catalyzes the condensation reaction of fatty acid synthesis by the addition to an acyl acceptor of two carbons from malonyl-ACP. Catalyzes the first condensation reaction which initiates fatty acid synthesis and may therefore play a role in governing the total rate of fatty acid production. Possesses both acetoacetyl-ACP synthase and acetyl transacylase activities. Its substrate specificity determines the biosynthesis of branched-chain and/or straight-chain of fatty acids. The chain is Beta-ketoacyl-[acyl-carrier-protein] synthase III 1 from Vibrio vulnificus (strain YJ016).